The primary structure comprises 100 residues: UPF0125 protein CV_3462 (100 aa).

It belongs to the UPF0125 (RnfH) family.

In Chromobacterium violaceum (strain ATCC 12472 / DSM 30191 / JCM 1249 / CCUG 213 / NBRC 12614 / NCIMB 9131 / NCTC 9757 / MK), this protein is UPF0125 protein CV_3462.